The primary structure comprises 228 residues: 2-C-methyl-D-erythritol 4-phosphate cytidylyltransferase (228 aa).

This sequence belongs to the IspD/TarI cytidylyltransferase family. IspD subfamily.

The catalysed reaction is 2-C-methyl-D-erythritol 4-phosphate + CTP + H(+) = 4-CDP-2-C-methyl-D-erythritol + diphosphate. The protein operates within isoprenoid biosynthesis; isopentenyl diphosphate biosynthesis via DXP pathway; isopentenyl diphosphate from 1-deoxy-D-xylulose 5-phosphate: step 2/6. Its function is as follows. Catalyzes the formation of 4-diphosphocytidyl-2-C-methyl-D-erythritol from CTP and 2-C-methyl-D-erythritol 4-phosphate (MEP). The sequence is that of 2-C-methyl-D-erythritol 4-phosphate cytidylyltransferase from Halalkalibacterium halodurans (strain ATCC BAA-125 / DSM 18197 / FERM 7344 / JCM 9153 / C-125) (Bacillus halodurans).